A 402-amino-acid chain; its full sequence is Tyrosine--tRNA ligase (402 aa).

The 'HIGH' region motif lies at 48–57 (PSRPDLHLGH). The 'KMSKS' region motif lies at 232 to 236 (KMSKS). An ATP-binding site is contributed by K235. The 64-residue stretch at 339-402 (MPIIDLLTLL…KRKFFKIRSK (64 aa)) folds into the S4 RNA-binding domain.

Belongs to the class-I aminoacyl-tRNA synthetase family. TyrS type 2 subfamily. In terms of assembly, homodimer.

The protein localises to the cytoplasm. It carries out the reaction tRNA(Tyr) + L-tyrosine + ATP = L-tyrosyl-tRNA(Tyr) + AMP + diphosphate + H(+). Catalyzes the attachment of tyrosine to tRNA(Tyr) in a two-step reaction: tyrosine is first activated by ATP to form Tyr-AMP and then transferred to the acceptor end of tRNA(Tyr). The chain is Tyrosine--tRNA ligase from Chlorobium chlorochromatii (strain CaD3).